Consider the following 66-residue polypeptide: Nigrocin-2GRa (66 aa).

A signal peptide spans 1–22 (MFTLKKSQLLLFFPGTINLSLC). Residues 23 to 45 (QDETNAEEERRDEEVAKMEEIKR) constitute a propeptide that is removed on maturation. C60 and C66 are oxidised to a cystine.

Expressed by the skin glands.

It localises to the secreted. Antimicrobial peptide active at least against the Gram-positive bacterium S.aureus but with otherwise unclear activity spectrum. Lacks hemolytic activity against rabbit or human erythrocytes. The polypeptide is Nigrocin-2GRa (Odorrana grahami (Yunnanfu frog)).